Here is a 432-residue protein sequence, read N- to C-terminus: MTNLLWQKPGVAVDAKIQSFLAGDDVILDREFFLYDIAASKAHAQGLQHIGILSLQELGGLSEQLDLLAADFRSGAFVLDAQYEDCHSAIEARLTERLGDAGRKIHTGRSRNDQILVATRLWLKDKLQRVATLSAEIAEVALERAQAEAELPVPGYTHIQRAVVSSAGMWWAGWAEAFIDNAVRAGDTVHLVDSNPLGTAAGYGVNLPLDRAHTTAELGFARLLVSPIYAQLSRGKYELAALEALGSATLDLRRIAWDLSLFTSGEFAFVALPAQYTTGSSIMPNKRNPDVIELMRATHASVAAARTEIEQLLSLPSGYHRDLQSSKGAIVHGFGRGLAALELLPALLANLEWRPDKLRAAIDSGMYATDVAVEAAVAGVPFREAYKAAAQASETAGQGRTPEGSLAARVSPGAAADLQLDVLQARWQALRA.

It belongs to the lyase 1 family. Argininosuccinate lyase subfamily.

The protein resides in the cytoplasm. It carries out the reaction 2-(N(omega)-L-arginino)succinate = fumarate + L-arginine. The protein operates within amino-acid biosynthesis; L-arginine biosynthesis; L-arginine from L-ornithine and carbamoyl phosphate: step 3/3. In Xanthomonas axonopodis pv. citri (strain 306), this protein is Argininosuccinate lyase.